Here is a 292-residue protein sequence, read N- to C-terminus: Coiled-coil domain-containing protein 192 (292 aa).

The interval 28-55 (SVVPESDTSERSSMTSGSSESDIPQENK) is disordered. Over residues 38-49 (RSSMTSGSSESD) the composition is skewed to low complexity. Coiled coils occupy residues 65-174 (QMAF…LATA) and 222-258 (IMELSTQVSLQTERITQLKEVLEEKERKIQQLEAERS). Basic and acidic residues predominate over residues 251–267 (QQLEAERSPHPPQEVKD). The interval 251 to 292 (QQLEAERSPHPPQEVKDPPGCLPEAPVFSTHDIPPVVSDENL) is disordered.

The chain is Coiled-coil domain-containing protein 192 from Homo sapiens (Human).